Reading from the N-terminus, the 180-residue chain is UPF0340 protein YwlG (180 aa).

Belongs to the UPF0340 family.

The polypeptide is UPF0340 protein YwlG (ywlG) (Bacillus subtilis (strain 168)).